The following is a 321-amino-acid chain: Malate dehydrogenase (321 aa).

NAD(+) is bound by residues glycine 10–glycine 15 and aspartate 34. The substrate site is built by arginine 83 and arginine 89. NAD(+) is bound by residues asparagine 96 and isoleucine 119–asparagine 121. 2 residues coordinate substrate: asparagine 121 and arginine 152. Catalysis depends on histidine 176, which acts as the Proton acceptor.

It belongs to the LDH/MDH superfamily. MDH type 3 family.

The catalysed reaction is (S)-malate + NAD(+) = oxaloacetate + NADH + H(+). Catalyzes the reversible oxidation of malate to oxaloacetate. The protein is Malate dehydrogenase of Chelativorans sp. (strain BNC1).